A 450-amino-acid chain; its full sequence is Nuclear hormone receptor family member nhr-40 (450 aa).

A DNA-binding region (nuclear receptor) is located at residues 28–103 (GTLCVVCSDF…MGMDPKAIQH (76 aa)). 2 NR C4-type zinc fingers span residues 31-51 (CVVC…CNGC) and 67-91 (CQFS…LKKC). The NR LBD domain maps to 173-450 (DVKAVIEDLL…LIDQLIIVGL (278 aa)).

Belongs to the nuclear hormone receptor family. Isoform b: Expressed in body wall muscle cells, pharyngeal muscles, rectal gland cells, vulval and uterine muscles and neurons in the head and ventral nerve cord. Isoform c: Expressed in body wall muscle cells, neurons in the head, nerve ring, ventral and dorsal nerve cords and epidermal cells in the tail.

It localises to the nucleus. In terms of biological role, orphan nuclear receptor. Plays a role in morphogenesis and elongation during embryonic and larval development. Plays a role in muscle formation and motility. The chain is Nuclear hormone receptor family member nhr-40 from Caenorhabditis elegans.